A 274-amino-acid polypeptide reads, in one-letter code: MKKYLLGIGLILALIACKQNVSSLDEKNSVSVDLPGGMKVLVSKEKDKDGKYSLEATVDKLELKGTSDKNNGSGTLEGEKTDKSKVKLTIAEDLSKTTFEIFKEDGKTLVSKKVTLKDKSSTEEKFNEKGEISEKTIVRANGTRLEYTDIKSDGSGKAKEVLKDFTLEGTLAADGKTTLKVTEGTVVLSKNILKSGEITVALDDSDTTQATKKTGKWDSKTSTLTISVNSQKTKNLVFTKEDTITVQKYDSAGTNLEGKAVEITTLKELKDALK.

The signal sequence occupies residues 1–16 (MKKYLLGIGLILALIA). Cys-17 carries N-palmitoyl cysteine lipidation. Cys-17 carries the S-diacylglycerol cysteine lipid modification.

Belongs to the OspA lipoprotein family.

It localises to the cell outer membrane. The protein resides in the cell surface. This is Outer surface protein A from Borreliella burgdorferi (Lyme disease spirochete).